Reading from the N-terminus, the 272-residue chain is Leucoagglutinating phytohemagglutinin (272 aa).

The N-terminal stretch at methionine 1–serine 20 is a signal peptide. The N-linked (GlcNAc...) (high mannose) asparagine glycan is linked to asparagine 32. Asparagine 80 is a glycosylation site (N-linked (GlcNAc...) (complex) asparagine).

This sequence belongs to the leguminous lectin family. Homotetramer. N-glycosylated on Asn-80; contains xylose.

In terms of biological role, this insecticidal carbohydrate-binding lectin is toxic for the cowpea weevil. In Phaseolus vulgaris (Kidney bean), this protein is Leucoagglutinating phytohemagglutinin (DLEC2).